Reading from the N-terminus, the 334-residue chain is Phosphate acyltransferase (334 aa).

The protein belongs to the PlsX family. Homodimer. Probably interacts with PlsY.

The protein resides in the cytoplasm. It catalyses the reaction a fatty acyl-[ACP] + phosphate = an acyl phosphate + holo-[ACP]. The protein operates within lipid metabolism; phospholipid metabolism. In terms of biological role, catalyzes the reversible formation of acyl-phosphate (acyl-PO(4)) from acyl-[acyl-carrier-protein] (acyl-ACP). This enzyme utilizes acyl-ACP as fatty acyl donor, but not acyl-CoA. This Thermotoga petrophila (strain ATCC BAA-488 / DSM 13995 / JCM 10881 / RKU-1) protein is Phosphate acyltransferase.